Consider the following 444-residue polypeptide: Glutamate--tRNA ligase 2 (444 aa).

A 'HIGH' region motif is present at residues Pro7–Asn17. Residues Lys240–Arg244 carry the 'KMSKS' region motif. Lys243 contributes to the ATP binding site.

Belongs to the class-I aminoacyl-tRNA synthetase family. Glutamate--tRNA ligase type 1 subfamily. As to quaternary structure, monomer.

The protein localises to the cytoplasm. The catalysed reaction is tRNA(Glu) + L-glutamate + ATP = L-glutamyl-tRNA(Glu) + AMP + diphosphate. Its function is as follows. Catalyzes the attachment of glutamate to tRNA(Glu) in a two-step reaction: glutamate is first activated by ATP to form Glu-AMP and then transferred to the acceptor end of tRNA(Glu). This is Glutamate--tRNA ligase 2 from Gluconobacter oxydans (strain 621H) (Gluconobacter suboxydans).